A 482-amino-acid chain; its full sequence is Aspartyl/glutamyl-tRNA(Asn/Gln) amidotransferase subunit B (482 aa).

The protein belongs to the GatB/GatE family. GatB subfamily. Heterotrimer of A, B and C subunits.

It carries out the reaction L-glutamyl-tRNA(Gln) + L-glutamine + ATP + H2O = L-glutaminyl-tRNA(Gln) + L-glutamate + ADP + phosphate + H(+). The catalysed reaction is L-aspartyl-tRNA(Asn) + L-glutamine + ATP + H2O = L-asparaginyl-tRNA(Asn) + L-glutamate + ADP + phosphate + 2 H(+). Functionally, allows the formation of correctly charged Asn-tRNA(Asn) or Gln-tRNA(Gln) through the transamidation of misacylated Asp-tRNA(Asn) or Glu-tRNA(Gln) in organisms which lack either or both of asparaginyl-tRNA or glutaminyl-tRNA synthetases. The reaction takes place in the presence of glutamine and ATP through an activated phospho-Asp-tRNA(Asn) or phospho-Glu-tRNA(Gln). This Thermotoga neapolitana (strain ATCC 49049 / DSM 4359 / NBRC 107923 / NS-E) protein is Aspartyl/glutamyl-tRNA(Asn/Gln) amidotransferase subunit B.